Reading from the N-terminus, the 356-residue chain is S-adenosylmethionine:tRNA ribosyltransferase-isomerase (356 aa).

It belongs to the QueA family. Monomer.

The protein localises to the cytoplasm. The catalysed reaction is 7-aminomethyl-7-carbaguanosine(34) in tRNA + S-adenosyl-L-methionine = epoxyqueuosine(34) in tRNA + adenine + L-methionine + 2 H(+). It functions in the pathway tRNA modification; tRNA-queuosine biosynthesis. Transfers and isomerizes the ribose moiety from AdoMet to the 7-aminomethyl group of 7-deazaguanine (preQ1-tRNA) to give epoxyqueuosine (oQ-tRNA). The sequence is that of S-adenosylmethionine:tRNA ribosyltransferase-isomerase from Yersinia pseudotuberculosis serotype IB (strain PB1/+).